Reading from the N-terminus, the 329-residue chain is Aspartate carbamoyltransferase catalytic subunit (329 aa).

Positions 66 and 67 each coordinate carbamoyl phosphate. Lys-94 contacts L-aspartate. Arg-116, His-149, and Gln-152 together coordinate carbamoyl phosphate. The L-aspartate site is built by Arg-189 and Arg-243. Residues Gly-284 and Pro-285 each contribute to the carbamoyl phosphate site.

Belongs to the aspartate/ornithine carbamoyltransferase superfamily. ATCase family. Heterododecamer (2C3:3R2) of six catalytic PyrB chains organized as two trimers (C3), and six regulatory PyrI chains organized as three dimers (R2).

The enzyme catalyses carbamoyl phosphate + L-aspartate = N-carbamoyl-L-aspartate + phosphate + H(+). The protein operates within pyrimidine metabolism; UMP biosynthesis via de novo pathway; (S)-dihydroorotate from bicarbonate: step 2/3. In terms of biological role, catalyzes the condensation of carbamoyl phosphate and aspartate to form carbamoyl aspartate and inorganic phosphate, the committed step in the de novo pyrimidine nucleotide biosynthesis pathway. The chain is Aspartate carbamoyltransferase catalytic subunit from Gloeobacter violaceus (strain ATCC 29082 / PCC 7421).